The following is a 332-amino-acid chain: uncharacterized protein (332 aa).

The chain crosses the membrane as a helical span at residues 185 to 205 (MVYGYSVFNAFFILLALPNVI).

The protein localises to the host membrane. This is an uncharacterized protein from Sulfolobus islandicus filamentous virus (isolate Iceland/Hveragerdi) (SIFV).